A 374-amino-acid chain; its full sequence is UPF0496 protein At4g34320 (374 aa).

2 consecutive transmembrane segments (helical) span residues 215–235 (IIFVATFATVLICSVVAAAMA) and 238–258 (PVAAALAAATAVPLGSMGKWI).

The protein belongs to the UPF0496 family.

The protein localises to the membrane. The protein is UPF0496 protein At4g34320 of Arabidopsis thaliana (Mouse-ear cress).